We begin with the raw amino-acid sequence, 199 residues long: Thymidylate kinase (199 aa).

Residue Gly-7–Ser-14 participates in ATP binding.

It belongs to the thymidylate kinase family.

It catalyses the reaction dTMP + ATP = dTDP + ADP. Phosphorylation of dTMP to form dTDP in both de novo and salvage pathways of dTTP synthesis. The sequence is that of Thymidylate kinase from Neorickettsia sennetsu (strain ATCC VR-367 / Miyayama) (Ehrlichia sennetsu).